The primary structure comprises 393 residues: METTMGFMDDNATNTSTSFLSVLNPHGAHATSFPFNFSYSDYDMPLDEDEDVTNSRTFFAAKIVIGMALVGIMLVCGIGNFIFIAALVRYKKLRNLTNLLIANLAISDFLVAIVCCPFEMDYYVVRQLSWEHGHVLCTSVNYLRTVSLYVSTNALLAIAIDRYLAIVHPLRPRMKCQTATGLIALVWTVSILIAIPSAYFTTETVLVIVKSQEKIFCGQIWPVDQQLYYKSYFLFIFGIEFVGPVVTMTLCYARISRELWFKAVPGFQTEQIRKRLRCRRKTVLVLMCILTAYVLCWAPFYGFTIVRDFFPTVFVKEKHYLTAFYIVECIAMSNSMINTLCFVTVKNDTVKYFKKIMLLHWKASYNGGKSSADLDLKTIGMPATEEVDCIRLK.

Residues 1–62 (METTMGFMDD…TNSRTFFAAK (62 aa)) lie on the Extracellular side of the membrane. 3 N-linked (GlcNAc...) asparagine glycosylation sites follow: Asn-11, Asn-14, and Asn-36. A helical transmembrane segment spans residues 63–83 (IVIGMALVGIMLVCGIGNFIF). Residues 84–98 (IAALVRYKKLRNLTN) are Cytoplasmic-facing. Residues 99 to 119 (LLIANLAISDFLVAIVCCPFE) form a helical membrane-spanning segment. The Extracellular portion of the chain corresponds to 120–146 (MDYYVVRQLSWEHGHVLCTSVNYLRTV). An intrachain disulfide couples Cys-137 to Cys-217. Residues 147-167 (SLYVSTNALLAIAIDRYLAIV) traverse the membrane as a helical segment. The Cytoplasmic segment spans residues 168 to 180 (HPLRPRMKCQTAT). A helical membrane pass occupies residues 181–201 (GLIALVWTVSILIAIPSAYFT). Topologically, residues 202-232 (TETVLVIVKSQEKIFCGQIWPVDQQLYYKSY) are extracellular. The chain crosses the membrane as a helical span at residues 233–253 (FLFIFGIEFVGPVVTMTLCYA). Over 254–282 (RISRELWFKAVPGFQTEQIRKRLRCRRKT) the chain is Cytoplasmic. Residues 283–303 (VLVLMCILTAYVLCWAPFYGF) form a helical membrane-spanning segment. Residues 304–322 (TIVRDFFPTVFVKEKHYLT) lie on the Extracellular side of the membrane. Residues 323 to 343 (AFYIVECIAMSNSMINTLCFV) form a helical membrane-spanning segment. Residues 344–393 (TVKNDTVKYFKKIMLLHWKASYNGGKSSADLDLKTIGMPATEEVDCIRLK) lie on the Cytoplasmic side of the membrane.

The protein belongs to the G-protein coupled receptor 1 family. In terms of tissue distribution, localizes to glandular epithelium, stroma and vascular endothelial cells of first trimester decidua (at protein level). Up-regulated in first trimester decidua when compared with non-pregnant endometrium. Expressed in the stomach, throughout the small intestine, colon, rectum, thyroid gland, pituitary gland, salivary gland, adrenal gland, testis, ovary, brain, spleen, prostate and pancreas.

The protein localises to the cell membrane. Receptor for prokineticin 1. Exclusively coupled to the G(q) subclass of heteromeric G proteins. Activation leads to mobilization of calcium, stimulation of phosphoinositide turnover and activation of p44/p42 mitogen-activated protein kinase. May play a role during early pregnancy. This chain is Prokineticin receptor 1 (PROKR1), found in Homo sapiens (Human).